A 388-amino-acid polypeptide reads, in one-letter code: Protein TsgA homolog (388 aa).

The next 12 membrane-spanning stretches (helical) occupy residues 12 to 32 (CISFLSYALTGALITITGIFL), 51 to 71 (TFLNAGILSSIFISSWITNII), 77 to 97 (LIFGFILTIIATLILIFSHNL), 102 to 122 (ISMFMLGIISGITMSIGTYII), 137 to 157 (LTDSFFSMSGIIFPIITALII), 163 to 183 (WYWVYFIIGIIYLIIFLITIN), 203 to 223 (FSILCLSISALLYILGQLSFI), 246 to 266 (SAFWMAYMVGMWIFSFILKFF), 272 to 292 (IITLSGISLFLMSLFNIFYDY), 294 to 314 (LLYIIILSLGFFSSAIYTIII), 331 to 351 (YILTSGTVGTLLTFIITGPIV), and 356 to 376 (IFSALLVSNILYGIVFFLVII).

It belongs to the major facilitator superfamily. TsgA family.

It is found in the cell membrane. This chain is Protein TsgA homolog, found in Buchnera aphidicola subsp. Baizongia pistaciae (strain Bp).